The following is a 904-amino-acid chain: Putative pentatricopeptide repeat-containing protein At1g19290 (904 aa).

19 PPR repeats span residues 154 to 188, 189 to 223, 224 to 254, 260 to 294, 295 to 329, 330 to 364, 365 to 399, 400 to 434, 435 to 469, 470 to 504, 505 to 539, 540 to 574, 575 to 609, 610 to 644, 645 to 679, 718 to 753, 754 to 788, 789 to 823, and 824 to 858; these read SPTV…GRIP, SLLS…EVSP, DVFT…TESS, NVVT…GVSR, NVVT…KLVA, DQHM…GVRT, NTTI…SLKP, DHHT…EVVP, TVMT…GVNA, DEIS…GLLT, DTIT…RCKP, AVQT…GIFP, TIEM…GLTP, TVAT…GITL, NVNI…DLLL, NNIV…RFIP, DEYT…GIIP, NIVT…GITP, and NAIT…GLVR.

This sequence belongs to the PPR family. P subfamily.

The polypeptide is Putative pentatricopeptide repeat-containing protein At1g19290 (Arabidopsis thaliana (Mouse-ear cress)).